The following is a 243-amino-acid chain: tRNA (guanine-N(1)-)-methyltransferase (243 aa).

S-adenosyl-L-methionine-binding positions include G108 and 127–132; that span reads LGDYVL.

This sequence belongs to the RNA methyltransferase TrmD family. Homodimer.

The protein resides in the cytoplasm. The catalysed reaction is guanosine(37) in tRNA + S-adenosyl-L-methionine = N(1)-methylguanosine(37) in tRNA + S-adenosyl-L-homocysteine + H(+). In terms of biological role, specifically methylates guanosine-37 in various tRNAs. The chain is tRNA (guanine-N(1)-)-methyltransferase from Streptococcus gordonii (strain Challis / ATCC 35105 / BCRC 15272 / CH1 / DL1 / V288).